The sequence spans 533 residues: T-complex protein 1 subunit delta (533 aa).

The segment covering 1–15 has biased composition (polar residues); the sequence is MAQSQVGKGSPSNAT. Residues 1-25 form a disordered region; the sequence is MAQSQVGKGSPSNATFRDKEKPQEV. Residues 16–25 are compositionally biased toward basic and acidic residues; it reads FRDKEKPQEV.

The protein belongs to the TCP-1 chaperonin family. Heterooligomeric complex of about 850 to 900 kDa that forms two stacked rings, 12 to 16 nm in diameter.

The protein localises to the cytoplasm. In terms of biological role, molecular chaperone; assists the folding of proteins upon ATP hydrolysis. Known to play a role, in vitro, in the folding of actin and tubulin. The protein is T-complex protein 1 subunit delta (CCT4) of Debaryomyces hansenii (strain ATCC 36239 / CBS 767 / BCRC 21394 / JCM 1990 / NBRC 0083 / IGC 2968) (Yeast).